The primary structure comprises 465 residues: ATP synthase subunit beta (465 aa).

148-155 contributes to the ATP binding site; that stretch reads GGAGVGKT.

It belongs to the ATPase alpha/beta chains family. As to quaternary structure, F-type ATPases have 2 components, CF(1) - the catalytic core - and CF(0) - the membrane proton channel. CF(1) has five subunits: alpha(3), beta(3), gamma(1), delta(1), epsilon(1). CF(0) has three main subunits: a(1), b(2) and c(9-12). The alpha and beta chains form an alternating ring which encloses part of the gamma chain. CF(1) is attached to CF(0) by a central stalk formed by the gamma and epsilon chains, while a peripheral stalk is formed by the delta and b chains.

The protein resides in the cell inner membrane. The catalysed reaction is ATP + H2O + 4 H(+)(in) = ADP + phosphate + 5 H(+)(out). In terms of biological role, produces ATP from ADP in the presence of a proton gradient across the membrane. The catalytic sites are hosted primarily by the beta subunits. This Neisseria gonorrhoeae (strain ATCC 700825 / FA 1090) protein is ATP synthase subunit beta.